Reading from the N-terminus, the 141-residue chain is Large ribosomal subunit protein uL11 (141 aa).

This sequence belongs to the universal ribosomal protein uL11 family. As to quaternary structure, part of the ribosomal stalk of the 50S ribosomal subunit. Interacts with L10 and the large rRNA to form the base of the stalk. L10 forms an elongated spine to which L12 dimers bind in a sequential fashion forming a multimeric L10(L12)X complex. Post-translationally, one or more lysine residues are methylated.

Forms part of the ribosomal stalk which helps the ribosome interact with GTP-bound translation factors. The sequence is that of Large ribosomal subunit protein uL11 from Streptococcus pneumoniae (strain Hungary19A-6).